Reading from the N-terminus, the 452-residue chain is MDGTIKEALSVVSDDQSLFDSAYGAAAHLPKADMTASGSPDYGQPHKINPLPPQQEWINQPVRVNVKREYDHMNGSRESPVDCSVSKCSKLVGGGESNPMNYNSYMDEKNGPPPPNMTTNERRVIVPADPTLWTQEHVRQWLEWAIKEYSLMEIDTSFFQNMDGKELCKMNKEDFLRATTLYNTEVLLSHLSYLRESSLLAYNTTSHTDQSSRLSVKEDPSYDSVRRGAWGNNMNSGLNKSPPLGGAQTISKNTEQRPQPDPYQILGPTSSRLANPGSGQIQLWQFLLELLSDSANASCITWEGTNGEFKMTDPDEVARRWGERKSKPNMNYDKLSRALRYYYDKNIMTKVHGKRYAYKFDFHGIAQALQPHPTESSMYKYPSDISYMPSYHAHQQKVNFVPPHPSSMPVTSSSFFGAASQYWTSPTGGIYPNPNVPRHPNTHVPSHLGSYY.

S39 bears the Phosphoserine mark. Positions 112 to 198 (PPPPNMTTNE…SHLSYLRESS (87 aa)) constitute a PNT domain. The interval 209 to 271 (DQSSRLSVKE…PYQILGPTSS (63 aa)) is disordered. Basic and acidic residues predominate over residues 215 to 226 (SVKEDPSYDSVR). The span at 248 to 257 (QTISKNTEQR) shows a compositional bias: polar residues. Positions 281 to 361 (IQLWQFLLEL…HGKRYAYKFD (81 aa)) form a DNA-binding region, ETS. The segment at 433-452 (NPNVPRHPNTHVPSHLGSYY) is disordered.

The protein belongs to the ETS family. As to quaternary structure, can form homodimers or heterodimers with ETV6/TEL1.

The protein localises to the nucleus. Functionally, sequence-specific transcriptional activator. Recognizes the DNA sequence 5'-C[CA]GGAAGT-3'. This Homo sapiens (Human) protein is Friend leukemia integration 1 transcription factor (FLI1).